A 181-amino-acid chain; its full sequence is Trafficking protein particle complex subunit 3-like protein (181 aa).

Cysteine 68 carries the S-palmitoyl cysteine lipid modification.

The protein belongs to the TRAPP small subunits family. BET3 subfamily. Homodimer. Component of the multisubunit TRAPP (transport protein particle) complex, which includes at least TRAPPC2, TRAPPC2L, TRAPPC3, TRAPPC3L, TRAPPC4, TRAPPC5, TRAPPC8, TRAPPC9, TRAPPC10, TRAPPC11 and TRAPPC12.

The protein localises to the golgi apparatus. It localises to the cis-Golgi network. The protein resides in the endoplasmic reticulum. Its function is as follows. May play a role in vesicular transport from endoplasmic reticulum to Golgi. This Homo sapiens (Human) protein is Trafficking protein particle complex subunit 3-like protein (TRAPPC3L).